We begin with the raw amino-acid sequence, 87 residues long: Small ribosomal subunit protein bS20 (87 aa).

The span at 1–11 shows a compositional bias: basic residues; it reads MANHKSALKRI. The interval 1–23 is disordered; the sequence is MANHKSALKRIKQTEKRTERNRH.

Belongs to the bacterial ribosomal protein bS20 family.

Binds directly to 16S ribosomal RNA. In Geotalea daltonii (strain DSM 22248 / JCM 15807 / FRC-32) (Geobacter daltonii), this protein is Small ribosomal subunit protein bS20.